A 271-amino-acid chain; its full sequence is MRASASSAVTVVNAFATGVGSAIGIDLWTRAEVKLKGDGIEGEIRVRGEQVRDFRLVKAVADVFREKTGEEFGIKFRIESEIPIAMGLKSSSAAANALSKALADALGLDMSEMEVVKAGVEAAKRAGVTLTGAFDDACASYFGSLWVTDNLGMRVLHSSKVEPLPVVLLLPGKTLLTESLGGRDFSPIRPYVEEAVRLALEGEWRKAALINGLVYSTYLGHPIEPFRIALERGAVVGLSGKGPAVFAVTNEPEELAEEWEQFGKVLTTELR.

An ATP-binding site is contributed by 83-93 (PIAMGLKSSSA).

It belongs to the GHMP kinase family. Archaeal shikimate kinase subfamily.

The protein localises to the cytoplasm. It carries out the reaction shikimate + ATP = 3-phosphoshikimate + ADP + H(+). It functions in the pathway metabolic intermediate biosynthesis; chorismate biosynthesis; chorismate from D-erythrose 4-phosphate and phosphoenolpyruvate: step 5/7. The polypeptide is Shikimate kinase (Thermococcus kodakarensis (strain ATCC BAA-918 / JCM 12380 / KOD1) (Pyrococcus kodakaraensis (strain KOD1))).